We begin with the raw amino-acid sequence, 148 residues long: MLQLANRSVRAKAARASQSARSVSCAAAKRGADVAPLTSALAVTASILLTTGAASASAADLALGAQVFNGNCAACHMGGRNSVMPEKTLDKAALEQYLDGGFKVESIIYQVENGKGAMPAWADRLSEEEIQAVAEYVFKQATDAAWKY.

A chloroplast-targeting transit peptide spans 1-58; the sequence is MLQLANRSVRAKAARASQSARSVSCAAAKRGADVAPLTSALAVTASILLTTGAASASA. Heme c-binding residues include Cys72, Cys75, His76, and Met118.

This sequence belongs to the cytochrome c family. PetJ subfamily. As to quaternary structure, thought to function as a monomer, however 2 crystal forms are observed; a homodimer and homotrimer, suggesting the protein oligomerizes. In terms of processing, binds 1 heme c group covalently per subunit.

It is found in the plastid. It localises to the chloroplast thylakoid lumen. In terms of biological role, functions as an electron carrier between membrane-bound cytochrome b6-f and photosystem I in oxygenic photosynthesis. The polypeptide is Cytochrome c6, chloroplastic (petJ) (Chlamydomonas reinhardtii (Chlamydomonas smithii)).